A 688-amino-acid chain; its full sequence is Glycine--tRNA ligase beta subunit (688 aa).

It belongs to the class-II aminoacyl-tRNA synthetase family. In terms of assembly, tetramer of two alpha and two beta subunits.

The protein resides in the cytoplasm. The enzyme catalyses tRNA(Gly) + glycine + ATP = glycyl-tRNA(Gly) + AMP + diphosphate. This chain is Glycine--tRNA ligase beta subunit, found in Lactobacillus delbrueckii subsp. bulgaricus (strain ATCC BAA-365 / Lb-18).